A 451-amino-acid polypeptide reads, in one-letter code: MDSPLAIIVLAAGKGTRMKSDLHKVLHPIAGRPMLMHLMASAAELSPARQVVVAGHGREQLEKALGGSADIAVQDPQLGTAHAVQQAQGALSGFEGDVLILYGDVPFVRASTMRAMIERLHGADEPAAVVLGFAPADTLQYGRVIADDGRIVKMVEHKDASEAERACRVCNSGLMAVRSADLFGLLARVGNDNAQGEYYLPDVVNIAIADGRTCAVVVTDDADEVAGINSRGELAEAEGRWQQRRRAAAMADGASLIAPETVWFAWDTVLGRDVTIEPNVFFGPGVTVGDNVTIHAFSHLEGASLAQGVEVGPYARLRPGARLEEKVKVGNFVEVKNAVLHKGAKANHLTYLGDADVGAGANIGAGTITCNYDGYFKHRTVIGERAFIGSNSALIAPVRIGADAIVAAGSAVSRDVADGELRMVRAEQLVKPGWADRFHDAMKKKKAEKKS.

The segment at 1 to 231 (MDSPLAIIVL…ADEVAGINSR (231 aa)) is pyrophosphorylase. UDP-N-acetyl-alpha-D-glucosamine contacts are provided by residues 10–13 (LAAG), Lys24, Gln74, 79–80 (GT), 102–104 (YGD), Gly142, Glu156, Asn171, and Asn229. Position 104 (Asp104) interacts with Mg(2+). Residue Asn229 participates in Mg(2+) binding. Positions 232 to 252 (GELAEAEGRWQQRRRAAAMAD) are linker. Residues 253 to 451 (GASLIAPETV…MKKKKAEKKS (199 aa)) are N-acetyltransferase. UDP-N-acetyl-alpha-D-glucosamine contacts are provided by Arg318 and Lys336. His348 (proton acceptor) is an active-site residue. Residues Tyr351 and Asn362 each contribute to the UDP-N-acetyl-alpha-D-glucosamine site. Residues Ala365, 371 to 372 (NY), Ser390, Ala408, and Arg425 contribute to the acetyl-CoA site.

This sequence in the N-terminal section; belongs to the N-acetylglucosamine-1-phosphate uridyltransferase family. The protein in the C-terminal section; belongs to the transferase hexapeptide repeat family. Homotrimer. Mg(2+) is required as a cofactor.

The protein localises to the cytoplasm. It catalyses the reaction alpha-D-glucosamine 1-phosphate + acetyl-CoA = N-acetyl-alpha-D-glucosamine 1-phosphate + CoA + H(+). The catalysed reaction is N-acetyl-alpha-D-glucosamine 1-phosphate + UTP + H(+) = UDP-N-acetyl-alpha-D-glucosamine + diphosphate. The protein operates within nucleotide-sugar biosynthesis; UDP-N-acetyl-alpha-D-glucosamine biosynthesis; N-acetyl-alpha-D-glucosamine 1-phosphate from alpha-D-glucosamine 6-phosphate (route II): step 2/2. It participates in nucleotide-sugar biosynthesis; UDP-N-acetyl-alpha-D-glucosamine biosynthesis; UDP-N-acetyl-alpha-D-glucosamine from N-acetyl-alpha-D-glucosamine 1-phosphate: step 1/1. Its pathway is bacterial outer membrane biogenesis; LPS lipid A biosynthesis. In terms of biological role, catalyzes the last two sequential reactions in the de novo biosynthetic pathway for UDP-N-acetylglucosamine (UDP-GlcNAc). The C-terminal domain catalyzes the transfer of acetyl group from acetyl coenzyme A to glucosamine-1-phosphate (GlcN-1-P) to produce N-acetylglucosamine-1-phosphate (GlcNAc-1-P), which is converted into UDP-GlcNAc by the transfer of uridine 5-monophosphate (from uridine 5-triphosphate), a reaction catalyzed by the N-terminal domain. This Novosphingobium aromaticivorans (strain ATCC 700278 / DSM 12444 / CCUG 56034 / CIP 105152 / NBRC 16084 / F199) protein is Bifunctional protein GlmU.